The chain runs to 74 residues: uncharacterized protein (74 aa).

The helical transmembrane segment at 7–26 threads the bilayer; sequence IHLYVMASAMSSSPIFFFFQ.

It localises to the membrane. This is an uncharacterized protein from Homo sapiens (Human).